The chain runs to 493 residues: Cytochrome c-552 (493 aa).

Residues Met-1–Gly-25 form the signal peptide. His-116 contributes to the heme c binding site. Cys-144, Cys-147, and Lys-148 together coordinate heme. Heme c contacts are provided by Cys-182, Cys-185, His-186, Cys-224, Cys-227, and His-228. Ca(2+) is bound by residues Glu-230, Tyr-231, Lys-276, and Gln-278. Substrate is bound at residue Tyr-231. His-279 is a binding site for substrate. Positions 290, 297, 300, 301, 315, 328, 331, 332, and 407 each coordinate heme c.

The protein belongs to the cytochrome c-552 family. The cofactor is Ca(2+). Heme c is required as a cofactor.

The protein resides in the periplasm. It carries out the reaction 6 Fe(III)-[cytochrome c] + NH4(+) + 2 H2O = 6 Fe(II)-[cytochrome c] + nitrite + 8 H(+). It functions in the pathway nitrogen metabolism; nitrate reduction (assimilation). In terms of biological role, catalyzes the reduction of nitrite to ammonia, consuming six electrons in the process. This chain is Cytochrome c-552, found in Bacteroides thetaiotaomicron (strain ATCC 29148 / DSM 2079 / JCM 5827 / CCUG 10774 / NCTC 10582 / VPI-5482 / E50).